The following is a 579-amino-acid chain: Vitamin B6 transporter TPN1 (579 aa).

Topologically, residues 1–98 are cytoplasmic; that stretch reads MNRDNMDTTK…LHVAGLWLSA (98 aa). The chain crosses the membrane as a helical span at residues 99 to 119; it reads TGGLSSMSSFLLGPLLFGLSF. Residues 120–122 are Extracellular-facing; sequence RES. A helical membrane pass occupies residues 123-143; that stretch reads VASSLISVTIGCLIAAYCSIM. The Cytoplasmic portion of the chain corresponds to 144–157; sequence GPQSGCRQMVTARY. The chain crosses the membrane as a helical span at residues 158-178; that stretch reads LFGWWFVKLVALASIIGVMGW. The Extracellular portion of the chain corresponds to 179–198; the sequence is SVVNSVVGGEMLAAISNDKV. The chain crosses the membrane as a helical span at residues 199 to 219; that stretch reads PLWVGIVIVTVCSFLVAIFGI. The Cytoplasmic segment spans residues 220-221; the sequence is KQ. The chain crosses the membrane as a helical span at residues 222-242; that stretch reads VIKVETYLSVPVLTAFLLLYI. At 243–274 the chain is on the extracellular side; sequence SSSDKYSFVNAYVSKGNLDSSTRKGNWMSFFS. Residues 275–295 traverse the membrane as a helical segment; the sequence is LCYSITATWGSITADYYILFP. At 296-302 the chain is on the cytoplasmic side; it reads EDTPYIQ. The chain crosses the membrane as a helical span at residues 303–323; the sequence is IFCLTFFGTFLPTCFVGILGL. Residues 324–362 lie on the Extracellular side of the membrane; that stretch reads LLASVAMSYKPWSVEYDSHGMGGLLWAGFQRWNGFGKFC. Residues 363-383 form a helical membrane-spanning segment; the sequence is VVVLVFSLVSNNIINTYSAAF. Residues 384–394 lie on the Cytoplasmic side of the membrane; it reads SIQLSSVFCAK. A helical membrane pass occupies residues 395–415; it reads IPRWFWSIVCTIICLVCALIG. The Extracellular segment spans residues 416–421; sequence RNHFST. Residues 422 to 442 form a helical membrane-spanning segment; sequence ILGNFLPMIGYWISMYFILLF. Over 443–519 the chain is Cytoplasmic; sequence EENLVFRRFF…EVLTHGYAAT (77 aa). Residues 520 to 540 traverse the membrane as a helical segment; the sequence is FAFIVGVAGVVVGMAQAYWIG. Residues 541–545 lie on the Extracellular side of the membrane; sequence PIAAK. The chain crosses the membrane as a helical span at residues 546–566; sequence FGEYGGDVAMWLSMAFSGVVY. The Cytoplasmic segment spans residues 567-579; that stretch reads PPCRYLELRKFGR.

It belongs to the purine-cytosine permease (2.A.39) family.

The protein localises to the membrane. Functionally, thiamine-regulated, high affinity import carrier of pyridoxine, pyridoxal and pyridoxamine. This chain is Vitamin B6 transporter TPN1 (TPN1), found in Saccharomyces cerevisiae (strain ATCC 204508 / S288c) (Baker's yeast).